The primary structure comprises 473 residues: Photosystem II CP43 reaction center protein (473 aa).

Residues methionine 1–glutamate 14 constitute a propeptide that is removed on maturation. The next 5 membrane-spanning stretches (helical) occupy residues leucine 69–alanine 93, leucine 134–asparagine 155, lysine 178–asparagine 200, lysine 255–serine 275, and tryptophan 291–alanine 312. [CaMn4O5] cluster is bound at residue glutamate 367. Residues arginine 447–leucine 471 form a helical membrane-spanning segment.

It belongs to the PsbB/PsbC family. PsbC subfamily. As to quaternary structure, PSII is composed of 1 copy each of membrane proteins PsbA, PsbB, PsbC, PsbD, PsbE, PsbF, PsbH, PsbI, PsbJ, PsbK, PsbL, PsbM, PsbT, PsbY, PsbZ, Psb30/Ycf12, at least 3 peripheral proteins of the oxygen-evolving complex and a large number of cofactors. It forms dimeric complexes. Requires Binds multiple chlorophylls and provides some of the ligands for the Ca-4Mn-5O cluster of the oxygen-evolving complex. It may also provide a ligand for a Cl- that is required for oxygen evolution. PSII binds additional chlorophylls, carotenoids and specific lipids. as cofactor.

Its subcellular location is the plastid. The protein resides in the chloroplast thylakoid membrane. Its function is as follows. One of the components of the core complex of photosystem II (PSII). It binds chlorophyll and helps catalyze the primary light-induced photochemical processes of PSII. PSII is a light-driven water:plastoquinone oxidoreductase, using light energy to abstract electrons from H(2)O, generating O(2) and a proton gradient subsequently used for ATP formation. This is Photosystem II CP43 reaction center protein from Galdieria sulphuraria (Red alga).